The primary structure comprises 103 residues: Large ribosomal subunit protein bL21 (103 aa).

The protein belongs to the bacterial ribosomal protein bL21 family. In terms of assembly, part of the 50S ribosomal subunit. Contacts protein L20.

Its function is as follows. This protein binds to 23S rRNA in the presence of protein L20. This is Large ribosomal subunit protein bL21 from Mannheimia succiniciproducens (strain KCTC 0769BP / MBEL55E).